Reading from the N-terminus, the 275-residue chain is 2,3,4,5-tetrahydropyridine-2,6-dicarboxylate N-succinyltransferase (275 aa).

Residues arginine 108 and aspartate 145 each coordinate substrate.

It belongs to the transferase hexapeptide repeat family. Homotrimer.

Its subcellular location is the cytoplasm. It carries out the reaction (S)-2,3,4,5-tetrahydrodipicolinate + succinyl-CoA + H2O = (S)-2-succinylamino-6-oxoheptanedioate + CoA. It functions in the pathway amino-acid biosynthesis; L-lysine biosynthesis via DAP pathway; LL-2,6-diaminopimelate from (S)-tetrahydrodipicolinate (succinylase route): step 1/3. In Roseobacter denitrificans (strain ATCC 33942 / OCh 114) (Erythrobacter sp. (strain OCh 114)), this protein is 2,3,4,5-tetrahydropyridine-2,6-dicarboxylate N-succinyltransferase.